We begin with the raw amino-acid sequence, 193 residues long: Peptidyl-tRNA hydrolase (193 aa).

Tyrosine 16 provides a ligand contact to tRNA. Histidine 21 functions as the Proton acceptor in the catalytic mechanism. Residues phenylalanine 67, asparagine 69, and asparagine 115 each coordinate tRNA.

The protein belongs to the PTH family. Monomer.

The protein localises to the cytoplasm. It catalyses the reaction an N-acyl-L-alpha-aminoacyl-tRNA + H2O = an N-acyl-L-amino acid + a tRNA + H(+). Its function is as follows. Hydrolyzes ribosome-free peptidyl-tRNAs (with 1 or more amino acids incorporated), which drop off the ribosome during protein synthesis, or as a result of ribosome stalling. Functionally, catalyzes the release of premature peptidyl moieties from peptidyl-tRNA molecules trapped in stalled 50S ribosomal subunits, and thus maintains levels of free tRNAs and 50S ribosomes. This is Peptidyl-tRNA hydrolase from Psychrobacter cryohalolentis (strain ATCC BAA-1226 / DSM 17306 / VKM B-2378 / K5).